A 511-amino-acid polypeptide reads, in one-letter code: MSSSGEERGVVVAESEPPRGNRSRFAFACAILASMTSIILGYDIGVMSGAAIFIKDDLKLSDVQLEILMGILNIYSLIGSGAAGRTSDWIGRRYTIVLAGFFFFCGALLMGFATNYPFIMVGRFVAGIGVGYAMMIAPVYTTEVAPASSRGFLSSFPEIFINIGILLGYVSNYFFAKLPEHIGWRFMLGIGAVPSVFLAIGVLAMPESPRWLVMQGRLGDAFKVLDKTSNTKEEAISRLNDIKRAVGIPDDMTDDVIVVPNKKSAGKGVWKDLLVRPTPSVRHILIACLGIHFSQQASGIDAVVLYSPTIFSRAGLKSKNDQLLATVAVGVVKTLFIVVGTCLVDRFGRRALLLTSMGGMFFSLTALGTSLTVIDRNPGQTLKWAIGLAVTTVMTFVATFSLGAGPVTWVYASEIFPVRLRAQGASLGVMLNRLMSGIIGMTFLSLSKGLTIGGAFLLFAGVAVAAWVFFFTFLPETRGVPLEEIESLFGSYSANKKNNVMSKGKQVVDEQ.

Helical transmembrane passes span 25–45, 63–83, 94–114, 117–137, 156–176, 186–206, 284–304, 324–344, 351–371, 384–404, 424–444, and 454–474; these read FAFACAILASMTSIILGYDIG, VQLEILMGILNIYSLIGSGAA, YTIVLAGFFFFCGALLMGFAT, PFIMVGRFVAGIGVGYAMMIA, FPEIFINIGILLGYVSNYFFA, FMLGIGAVPSVFLAIGVLAMP, ILIACLGIHFSQQASGIDAVV, LATVAVGVVKTLFIVVGTCLV, ALLLTSMGGMFFSLTALGTSL, WAIGLAVTTVMTFVATFSLGA, GASLGVMLNRLMSGIIGMTFL, and GAFLLFAGVAVAAWVFFFTFL.

It belongs to the major facilitator superfamily. Sugar transporter (TC 2.A.1.1) family.

The protein localises to the membrane. Its function is as follows. Plasma membrane sugar-proton symporter. The sequence is that of Putative polyol transporter 2 (PLT2) from Arabidopsis thaliana (Mouse-ear cress).